A 37-amino-acid chain; its full sequence is Large ribosomal subunit protein bL36 (37 aa).

Belongs to the bacterial ribosomal protein bL36 family.

This chain is Large ribosomal subunit protein bL36, found in Prochlorococcus marinus (strain MIT 9313).